Consider the following 461-residue polypeptide: Transforming growth factor beta-1-induced transcript 1 protein (461 aa).

Met-1 carries the post-translational modification N-acetylmethionine. The disordered stretch occupies residues 1 to 87 (MEDLDALLSD…PFSSSSGVLG (87 aa)). The tract at residues 1-200 (MEDLDALLSD…GCPSPPGQTS (200 aa)) is transcription activation. Residues 1 to 240 (MEDLDALLSD…CNKPIAGQVV (240 aa)) are interaction with PTK2B/PYK2. The LD motif 1 signature appears at 3 to 15 (DLDALLSDLETTT). At Thr-33 the chain carries Phosphothreonine. Tyr-38 carries the post-translational modification Phosphotyrosine. Positions 44-53 (TGSGESSGTT) are enriched in low complexity. Tyr-60 is subject to Phosphotyrosine. Position 68 is a phosphoserine (Ser-68). Residues 83 to 136 (SGVLGNGLCELDRLLQELNATQFNITDEIMSQFPSSKMAEGEEKEDQSEDKSSP) form an interaction with PTK2/FAK1 region. Positions 92–104 (ELDRLLQELNATQ) match the LD motif 2 motif. The segment at 116–154 (PSSKMAEGEEKEDQSEDKSSPTVPPSPFPAPSKPSATSA) is disordered. Over residues 137-147 (TVPPSPFPAPS) the composition is skewed to pro residues. Residues Ser-141, Ser-164, and Ser-186 each carry the phosphoserine modification. The short motif at 157–168 (ELDRLMASLSDF) is the LD motif 3 element. The tract at residues 171–204 (QNHLPASGPPQPPAASPTREGCPSPPGQTSKGSL) is disordered. Thr-188 is modified (phosphothreonine). A Phosphoserine modification is found at Ser-194. The LD motif 4 signature appears at 203–215 (SLDTMLGLLQSDL). LIM zinc-binding domains are found at residues 226–285 (GLCG…RFSP), 286–343 (RCGF…QLFA), 344–403 (PRCQ…QRGS), and 404–461 (LCAT…KLFG). Ser-403 carries the phosphoserine modification. Thr-407 is modified (phosphothreonine).

This sequence belongs to the paxillin family. In terms of assembly, homooligomer. Interacts with PPARG. Interacts with TRAF4. Interacts with CRIP2. Interacts with HSPB1. Interacts with ILK. Interacts with LIMS1 and LIMS2. Interacts with NCK2. Interacts with NUDT16L1. Interacts with PAK. Interacts with PTPN12. Interacts with TCF3. Interacts with TCF7L2. Interacts with VCL. Interacts (via LD motif 3) with GIT1. Also interacts with GIT2. Forms a complex with ARHGEF7. Interacts with AR/androgen receptor in a ligand-dependent manner. Interacts with CSK. Interacts with PTK2/FAK1 and PTK2B/PYK2. Interacts with SLC6A3. Interacts with SLC6A4. Interacts with NR3C1. Interacts with SMAD3. Interacts with MAPK15. Interacts with SRC. Interacts with LYN. Interacts with talin. Interacts (via LIM zinc-binding domain 2) with CBLC (via RING-type zinc finger); the interaction is direct and enhances CBLC E3 ubiquitin-protein ligase activity. Interacts with PARVA. Interacts with PXN. Post-translationally, phosphorylated by gonadotropin-releasing hormone-activated SRC. As to expression, ubiquitously expressed. Higher expression is detected in lung and spleen. Expression decreases during pregnancy in mammary glands. Expressed in all brain areas, with higher levels in cerebellum, prefrontal cortex and hypothalamus. Expressed in smooth muscle, myoepithelial cells and platelets (at protein level). Preferentially expressed in mesenchymal versus epithelial cells (at protein level).

It is found in the cell junction. It localises to the focal adhesion. Its subcellular location is the nucleus matrix. The protein localises to the cytoplasm. The protein resides in the cytoskeleton. Its function is as follows. Functions as a molecular adapter coordinating multiple protein-protein interactions at the focal adhesion complex and in the nucleus. Links various intracellular signaling modules to plasma membrane receptors and regulates the Wnt and TGFB signaling pathways. May also regulate SLC6A3 and SLC6A4 targeting to the plasma membrane hence regulating their activity. In the nucleus, functions as a nuclear receptor coactivator regulating glucocorticoid, androgen, mineralocorticoid and progesterone receptor transcriptional activity. May play a role in the processes of cell growth, proliferation, migration, differentiation and senescence. May have a zinc-dependent DNA-binding activity. The polypeptide is Transforming growth factor beta-1-induced transcript 1 protein (Tgfb1i1) (Mus musculus (Mouse)).